The primary structure comprises 192 residues: Large ribosomal subunit protein uL24c (192 aa).

The transit peptide at 1 to 47 (MAAMAALQSSFTSLSLSSNSFLGQRLFPSPTTLQVKTEGHSPCLIVM) directs the protein to the chloroplast.

Component of the chloroplast large ribosomal subunit (LSU). Mature 70S chloroplast ribosomes of higher plants consist of a small (30S) and a large (50S) subunit. The 30S small subunit contains 1 molecule of ribosomal RNA (16S rRNA) and 24 different proteins. The 50S large subunit contains 3 rRNA molecules (23S, 5S and 4.5S rRNA) and 33 different proteins.

The protein localises to the plastid. It localises to the chloroplast. Component of the chloroplast ribosome (chloro-ribosome), a dedicated translation machinery responsible for the synthesis of chloroplast genome-encoded proteins, including proteins of the transcription and translation machinery and components of the photosynthetic apparatus. The chain is Large ribosomal subunit protein uL24c (RPL24) from Spinacia oleracea (Spinach).